We begin with the raw amino-acid sequence, 479 residues long: Sulfate adenylyltransferase subunit 1 (479 aa).

Positions 22–238 (KDMLRFLTCG…DSMDISKEPK (217 aa)) constitute a tr-type G domain. A G1 region spans residues 31–38 (GSVDDGKS). 31–38 (GSVDDGKS) lines the GTP pocket. A G2 region spans residues 89–93 (GITID). Positions 110–113 (DTPG) are G3. Residues 110 to 114 (DTPGH) and 165 to 168 (NKMD) contribute to the GTP site. The interval 165 to 168 (NKMD) is G4. Residues 202–204 (SAL) form a G5 region.

It belongs to the TRAFAC class translation factor GTPase superfamily. Classic translation factor GTPase family. CysN/NodQ subfamily. In terms of assembly, heterodimer composed of CysD, the smaller subunit, and CysN.

The enzyme catalyses sulfate + ATP + H(+) = adenosine 5'-phosphosulfate + diphosphate. Its pathway is sulfur metabolism; hydrogen sulfide biosynthesis; sulfite from sulfate: step 1/3. In terms of biological role, with CysD forms the ATP sulfurylase (ATPS) that catalyzes the adenylation of sulfate producing adenosine 5'-phosphosulfate (APS) and diphosphate, the first enzymatic step in sulfur assimilation pathway. APS synthesis involves the formation of a high-energy phosphoric-sulfuric acid anhydride bond driven by GTP hydrolysis by CysN coupled to ATP hydrolysis by CysD. This chain is Sulfate adenylyltransferase subunit 1, found in Sulfurovum sp. (strain NBC37-1).